The primary structure comprises 255 residues: ATP synthase subunit a (255 aa).

Positions 1–6 (MNFIIN) are cleaved as a propeptide — removed in mature form. The next 5 helical transmembrane spans lie at 32–52 (LTSF…FSIL), 91–111 (LFPF…VSLV), 121–141 (LIWT…TGLA), 159–200 (PLVP…LAGL), and 219–251 (LSIL…IKDA).

As to quaternary structure, F-type ATP synthases have 2 components, the catalytic core F(1) and the membrane-embedded component F(0), linked together by a central stalk and a peripheral stalk. The central stalk, also called rotor shaft, is often seen as part of F(1). The peripheral stalk is seen as part of F(0). F(0) contains the membrane channel next to the rotor. F-type ATP synthases form dimers but each monomer functions independently in ATP generation. The dimer consists of 17 different polypeptides: ATP1 (subunit alpha, 3 molecules per monomer, part of F(1)), ATP2 (subunit beta, 3 copies per monomer, part of F(1)), ATP3 (subunit gamma, part of the central stalk), ATP4 (subunit b, part of the peripheral stalk), ATP5/OSCP (subunit 5/OSCP, part of the peripheral stalk), ATP6 (subunit a, part of the peripheral stalk), ATP7 (subunit d, part of the peripheral stalk), ATP8 (subunit 8, part of the peripheral stalk), OLI1 (subunit c, part of the rotor, 10 molecules per monomer), ATP14 (subunit h, part of the peripheral stalk), ATP15 (subunit epsilon, part of the central stalk), ATP16 (subunit delta, part of the central stalk), ATP17 (subunit f, part of the peripheral stalk), ATP18 (subunit i/j, part of the peripheral stalk), ATP19 (subunit k, dimer-specific, at interface between monomers), ATP20 (subunit g, at interface between monomers), TIM11 (subunit e, at interface between monomers).

The protein localises to the mitochondrion inner membrane. Functionally, mitochondrial membrane ATP synthase (F(1)F(0) ATP synthase or Complex V) produces ATP from ADP in the presence of a proton gradient across the membrane which is generated by electron transport complexes of the respiratory chain. F-type ATP synthases consist of two structural domains, F(1) - containing the extramembraneous catalytic core, and F(0) - containing the membrane proton channel, linked together by a central stalk and a peripheral stalk. During catalysis, ATP synthesis in the catalytic domain of F(1) is coupled via a rotary mechanism of the central stalk subunits to proton translocation. Key component of the proton channel; it may play a direct role in the translocation of protons across the membrane. The chain is ATP synthase subunit a from Yarrowia lipolytica (strain CLIB 122 / E 150) (Yeast).